The sequence spans 379 residues: Probable pectin lyase A (379 aa).

The N-terminal stretch at 1–19 (MKFALLSGVAAGLLPVVSA) is a signal peptide. 2 disulfide bridges follow: Cys-82/Cys-101 and Cys-91/Cys-225. Arg-255 is an active-site residue. Residues Cys-322 and Cys-330 are joined by a disulfide bond.

It belongs to the polysaccharide lyase 1 family.

The protein resides in the secreted. It carries out the reaction Eliminative cleavage of (1-&gt;4)-alpha-D-galacturonan methyl ester to give oligosaccharides with 4-deoxy-6-O-methyl-alpha-D-galact-4-enuronosyl groups at their non-reducing ends.. In terms of biological role, pectinolytic enzymes consist of four classes of enzymes: pectin lyase, polygalacturonase, pectin methylesterase and rhamnogalacturonase. Among pectinolytic enzymes, pectin lyase is the most important in depolymerization of pectin, since it cleaves internal glycosidic bonds of highly methylated pectins. This Aspergillus oryzae (strain ATCC 42149 / RIB 40) (Yellow koji mold) protein is Probable pectin lyase A (pelA).